A 376-amino-acid polypeptide reads, in one-letter code: Protein RecA (376 aa).

ATP is bound at residue 79–86 (GPESSGKT). Positions 357–376 (AAARAATDKPVETKGANAAA) are disordered.

Belongs to the RecA family.

It is found in the cytoplasm. Can catalyze the hydrolysis of ATP in the presence of single-stranded DNA, the ATP-dependent uptake of single-stranded DNA by duplex DNA, and the ATP-dependent hybridization of homologous single-stranded DNAs. It interacts with LexA causing its activation and leading to its autocatalytic cleavage. This is Protein RecA from Synechococcus sp. (strain CC9902).